The following is a 597-amino-acid chain: DNA import protein CedB (597 aa).

The helical transmembrane segment at 10–30 (VVLLILGIISFNLVFIILAII) threads the bilayer. Residue 286 to 293 (GPTGSGKT) participates in ATP binding.

Its subcellular location is the cell membrane. Part of the Ced system, which is involved in DNA import. The protein is DNA import protein CedB of Sulfolobus acidocaldarius (strain ATCC 33909 / DSM 639 / JCM 8929 / NBRC 15157 / NCIMB 11770).